The chain runs to 308 residues: Methionyl-tRNA formyltransferase (308 aa).

110–113 provides a ligand contact to (6S)-5,6,7,8-tetrahydrofolate; sequence SLLP.

It belongs to the Fmt family.

The enzyme catalyses L-methionyl-tRNA(fMet) + (6R)-10-formyltetrahydrofolate = N-formyl-L-methionyl-tRNA(fMet) + (6S)-5,6,7,8-tetrahydrofolate + H(+). Functionally, attaches a formyl group to the free amino group of methionyl-tRNA(fMet). The formyl group appears to play a dual role in the initiator identity of N-formylmethionyl-tRNA by promoting its recognition by IF2 and preventing the misappropriation of this tRNA by the elongation apparatus. The chain is Methionyl-tRNA formyltransferase from Neisseria meningitidis serogroup A / serotype 4A (strain DSM 15465 / Z2491).